A 375-amino-acid chain; its full sequence is Tyrosine--tRNA ligase (375 aa).

L-tyrosine contacts are provided by Tyr37, Tyr168, Gln172, Asp175, and Gln190. The 'KMSKS' region signature appears at 251–255; the sequence is KMSKS. ATP is bound at residue Lys254.

Belongs to the class-I aminoacyl-tRNA synthetase family. TyrS type 4 subfamily. As to quaternary structure, homodimer.

It is found in the cytoplasm. It carries out the reaction tRNA(Tyr) + L-tyrosine + ATP = L-tyrosyl-tRNA(Tyr) + AMP + diphosphate + H(+). Catalyzes the attachment of tyrosine to tRNA(Tyr) in a two-step reaction: tyrosine is first activated by ATP to form Tyr-AMP and then transferred to the acceptor end of tRNA(Tyr). The polypeptide is Tyrosine--tRNA ligase (Thermococcus gammatolerans (strain DSM 15229 / JCM 11827 / EJ3)).